Consider the following 149-residue polypeptide: Cyanate hydratase (149 aa).

Catalysis depends on residues Arg-90, Glu-93, and Ser-116.

The protein belongs to the cyanase family.

It catalyses the reaction cyanate + hydrogencarbonate + 3 H(+) = NH4(+) + 2 CO2. Its function is as follows. Catalyzes the reaction of cyanate with bicarbonate to produce ammonia and carbon dioxide. The sequence is that of Cyanate hydratase from Synechocystis sp. (strain ATCC 27184 / PCC 6803 / Kazusa).